Here is a 356-residue protein sequence, read N- to C-terminus: sn-glycerol-3-phosphate import ATP-binding protein UgpC (356 aa).

The ABC transporter domain maps to 4-235 (LKLQAVTKSW…PASLFVASFI (232 aa)). 37-44 (GPSGCGKS) provides a ligand contact to ATP.

Belongs to the ABC transporter superfamily. sn-glycerol-3-phosphate importer (TC 3.A.1.1.3) family. The complex is composed of two ATP-binding proteins (UgpC), two transmembrane proteins (UgpA and UgpE) and a solute-binding protein (UgpB).

The protein localises to the cell inner membrane. The catalysed reaction is sn-glycerol 3-phosphate(out) + ATP + H2O = sn-glycerol 3-phosphate(in) + ADP + phosphate + H(+). Its function is as follows. Part of the ABC transporter complex UgpBAEC involved in sn-glycerol-3-phosphate (G3P) import. Responsible for energy coupling to the transport system. The chain is sn-glycerol-3-phosphate import ATP-binding protein UgpC from Escherichia coli O6:K15:H31 (strain 536 / UPEC).